The chain runs to 394 residues: Mannosyl-3-phosphoglycerate synthase (394 aa).

This sequence belongs to the glycosyltransferase 2 family.

It is found in the cytoplasm. The catalysed reaction is (2R)-3-phosphoglycerate + GDP-alpha-D-mannose = 2-O-(alpha-D-mannosyl)-3-phosphoglycerate + GDP + H(+). The protein operates within carbohydrate biosynthesis; 2-(alpha-D-mannosyl)-D-glycerate biosynthesis; 2-(alpha-D-mannosyl)-D-glycerate from GDP-alpha-D-mannose (MPG route): step 1/2. Transfers a mannosyl group from GDP-mannose to phosphoglycerate to form mannosyl-3-phosphoglycerate (MPG). The sequence is that of Mannosyl-3-phosphoglycerate synthase (mngA) from Pyrococcus furiosus (strain ATCC 43587 / DSM 3638 / JCM 8422 / Vc1).